The primary structure comprises 462 residues: Probable peptidoglycan glycosyltransferase FtsW (462 aa).

The Cytoplasmic segment spans residues 1–63 (MGCIVCSDGI…VRDGRKFDAP (63 aa)). Residues 64 to 84 (LLWMVVLMTAFGLLMIYSASV) form a helical membrane-spanning segment. The Periplasmic portion of the chain corresponds to 85–97 (YLASKEGGDQFFY). A helical membrane pass occupies residues 98-118 (LTRQAGFVVAGLIASGFLWFL). The Cytoplasmic segment spans residues 119-125 (CRMRTWR). Residues 126–146 (RLVPWIFALSGLLLVAVLIAG) form a helical membrane-spanning segment. Residues 147–160 (REINGATRWIPLGP) are Periplasmic-facing. Residues 161–181 (LNFQPTELFKLAVILYLASLF) form a helical membrane-spanning segment. At 182–227 (TRREEVLRSMESLGWQSIWRGTANLIMSATNPQARRETLEMYGRFR) the chain is on the cytoplasmic side. The next 2 helical transmembrane spans lie at 228-248 (AIIL…VQPD) and 249-269 (FGSF…AGLP). The Cytoplasmic segment spans residues 270–271 (WK). A helical membrane pass occupies residues 272–292 (YFFVLVGSVLGGMVLMITAAP). Residues 293-348 (YRVQRVVAFLDPWKDPQGAGYQLTHSLMAIGRGEWFGMGLGASLSKRGFLPEAHTD) lie on the Periplasmic side of the membrane. Residues 349–369 (FIFAIIAEEFGFFGMCVLIFC) traverse the membrane as a helical segment. Over 370–386 (YGWLVVRAFSIGKQSRD) the chain is Cytoplasmic. Residues 387–409 (LGLTFNAYIASGIGIWIGIQSFF) traverse the membrane as a helical segment. The Periplasmic segment spans residues 410–424 (NIGVNIGALPTKGLT). A helical transmembrane segment spans residues 425–445 (LPLMSYGGSSVFFMLISMMLL). Residues 446 to 462 (LRIDYENRRKMRGYRVE) lie on the Cytoplasmic side of the membrane.

It belongs to the SEDS family. FtsW subfamily.

It is found in the cell inner membrane. It catalyses the reaction [GlcNAc-(1-&gt;4)-Mur2Ac(oyl-L-Ala-gamma-D-Glu-L-Lys-D-Ala-D-Ala)](n)-di-trans,octa-cis-undecaprenyl diphosphate + beta-D-GlcNAc-(1-&gt;4)-Mur2Ac(oyl-L-Ala-gamma-D-Glu-L-Lys-D-Ala-D-Ala)-di-trans,octa-cis-undecaprenyl diphosphate = [GlcNAc-(1-&gt;4)-Mur2Ac(oyl-L-Ala-gamma-D-Glu-L-Lys-D-Ala-D-Ala)](n+1)-di-trans,octa-cis-undecaprenyl diphosphate + di-trans,octa-cis-undecaprenyl diphosphate + H(+). It participates in cell wall biogenesis; peptidoglycan biosynthesis. In terms of biological role, peptidoglycan polymerase that is essential for cell division. The polypeptide is Probable peptidoglycan glycosyltransferase FtsW (Neisseria gonorrhoeae (strain NCCP11945)).